Reading from the N-terminus, the 454-residue chain is ESX-1 secretion-associated protein EspB (454 aa).

3 disordered regions span residues 17 to 40, 82 to 128, and 391 to 454; these read RADEVEAPMATPPTDVPQAPSGLT, GEVE…AGES, and AGQG…QDNK. A compositionally biased stretch (gly residues) spans 391–422; the sequence is AGQGGGAAGRGMAGGGMGMPMGGAGQGQGGAK.

This sequence belongs to the EspB family. Post-translationally, cleaved at close to the C-terminus during secretion.

It is found in the secreted. The chain is ESX-1 secretion-associated protein EspB from Mycobacterium marinum (strain ATCC BAA-535 / M).